The chain runs to 289 residues: Bis(5'-nucleosyl)-tetraphosphatase, symmetrical (289 aa).

Belongs to the Ap4A hydrolase family.

It catalyses the reaction P(1),P(4)-bis(5'-adenosyl) tetraphosphate + H2O = 2 ADP + 2 H(+). Functionally, hydrolyzes diadenosine 5',5'''-P1,P4-tetraphosphate to yield ADP. This is Bis(5'-nucleosyl)-tetraphosphatase, symmetrical from Yersinia pestis bv. Antiqua (strain Antiqua).